A 63-amino-acid polypeptide reads, in one-letter code: Large ribosomal subunit protein bL28 (63 aa).

This sequence belongs to the bacterial ribosomal protein bL28 family.

The chain is Large ribosomal subunit protein bL28 from Clostridium beijerinckii (strain ATCC 51743 / NCIMB 8052) (Clostridium acetobutylicum).